Here is a 379-residue protein sequence, read N- to C-terminus: Putative glutamate--cysteine ligase 2 (379 aa).

Belongs to the glutamate--cysteine ligase type 2 family. YbdK subfamily.

The enzyme catalyses L-cysteine + L-glutamate + ATP = gamma-L-glutamyl-L-cysteine + ADP + phosphate + H(+). Its function is as follows. ATP-dependent carboxylate-amine ligase which exhibits weak glutamate--cysteine ligase activity. The sequence is that of Putative glutamate--cysteine ligase 2 from Roseiflexus castenholzii (strain DSM 13941 / HLO8).